The primary structure comprises 266 residues: F-box only protein 50 (266 aa).

The span at 1–16 (MEKTQDRDTLSGRMEA) shows a compositional bias: basic and acidic residues. The disordered stretch occupies residues 1–53 (MEKTQDRDTLSGRMEAEGSLNSEELPPHPQSPPPPPSPRSPTSPVTPELPQPN). The segment covering 27-41 (PHPQSPPPPPSPRSP) has biased composition (pro residues). Residues S31, S37, S40, and S43 each carry the phosphoserine modification. T46 carries the post-translational modification Phosphothreonine. Residues 86-264 (LFLERPLYRN…VTDSSVSVQL (179 aa)) form the FBA domain.

In terms of tissue distribution, strongly expressed in kidney. Weakly expressed in stomach, colon, duodenum and prostate.

It is found in the cytoplasm. Promotes cell proliferation. This chain is F-box only protein 50 (Nccrp1), found in Mus musculus (Mouse).